A 386-amino-acid polypeptide reads, in one-letter code: WD repeat-containing protein 89 (386 aa).

WD repeat units follow at residues 21–65 (KEPT…LLRE), 68–107 (GSPG…EKPA), 112–156 (GYPS…QDLS), 167–207 (THSD…EEDA), 213–253 (NSVS…TDEP), and 318–357 (GHAA…KTFT).

The polypeptide is WD repeat-containing protein 89 (Wdr89) (Rattus norvegicus (Rat)).